The chain runs to 184 residues: Photosystem I assembly protein Ycf3 (184 aa).

TPR repeat units follow at residues 31 to 64 (AFAYYKAGMAAQAEGDYAEALENYYESLYLDEDQ), 68 to 101 (SYTLYNIGLIYAKNENYPRALEYYHQAVSLNSNL), and 131 to 164 (MEISEEYEYIELAKGLFDKAAEYWYQALKLAPDN).

Belongs to the Ycf3 family.

It is found in the plastid. Its subcellular location is the chloroplast thylakoid membrane. Its function is as follows. Essential for the assembly of the photosystem I (PSI) complex. May act as a chaperone-like factor to guide the assembly of the PSI subunits. The protein is Photosystem I assembly protein Ycf3 of Thalassiosira pseudonana (Marine diatom).